The chain runs to 294 residues: Ribosomal protein L11 methyltransferase (294 aa).

S-adenosyl-L-methionine contacts are provided by T145, G166, D188, and N230.

It belongs to the methyltransferase superfamily. PrmA family.

Its subcellular location is the cytoplasm. The enzyme catalyses L-lysyl-[protein] + 3 S-adenosyl-L-methionine = N(6),N(6),N(6)-trimethyl-L-lysyl-[protein] + 3 S-adenosyl-L-homocysteine + 3 H(+). Methylates ribosomal protein L11. This Glaesserella parasuis serovar 5 (strain SH0165) (Haemophilus parasuis) protein is Ribosomal protein L11 methyltransferase.